The following is a 470-amino-acid chain: MVDQVKVVADDQAPAEQSLRRNLTNRHIQLIAIGGAIGTGLFMGSGKTISLAGPSIIFVYMIIGFMLFFVMRAMGELLLSNLEYKSFSDFASDLLGPWAGYFTGWTYWFCWVVTGMADVVAITAYAQFWFPGLSDWVASLSVIILLLVLNLATVKMFGEMEFWFAMIKIVAIVSLIVVGLVMVAMHFQSPTGVEASFAHLWNDGGWFPKGLSGFFAGFQIAVFAFVGIELVGTTAAETKDPEKSLPRAINSIPIRIIMFYVFSLIVIMSVTPWSSVVPEKSPFVELFVLVGLPAAASVINFVVLTSAASSANSGVFSTSRMLFGLAQEGVAPKAFAKLSKRAVPAKGLTFSCICLLGGVVMLYVNPSVIGAFTMITTVSAILFMFVWTIILCSYLVYRKQRPHLHEKSIYKMPLGKLMCWVCMAFFVFVLVLLTLEDDTRQALLVTPLWFIALGLGWLFIGKKRAAELRK.

12 consecutive transmembrane segments (helical) span residues 30 to 50, 51 to 71, 102 to 122, 128 to 148, 162 to 182, 211 to 231, 256 to 276, 283 to 303, 350 to 370, 371 to 391, 413 to 433, and 441 to 461; these read LIAI…KTIS, LAGP…FFVM, FTGW…VVAI, FWFP…LLLV, FWFA…GLVM, LSGF…IELV, IIMF…WSSV, FVEL…NFVV, FSCI…SVIG, AFTM…TIIL, PLGK…LVLL, and QALL…LFIG.

Belongs to the amino acid-polyamine-organocation (APC) superfamily. Amino acid transporter (AAT) (TC 2.A.3.1) family.

It is found in the cell inner membrane. It carries out the reaction D-alanine(in) + H(+)(in) = D-alanine(out) + H(+)(out). The catalysed reaction is D-serine(out) + H(+)(out) = D-serine(in) + H(+)(in). The enzyme catalyses glycine(in) + H(+)(in) = glycine(out) + H(+)(out). It catalyses the reaction D-cycloserine(in) + H(+)(in) = D-cycloserine(out) + H(+)(out). With respect to regulation, uptake of D-serine is inhibited by D-alanine, D-cycloserine, glycine and at high concentrations of D-threonine. Permease that is involved in the transport across the cytoplasmic membrane of D-alanine, D-serine and glycine. Is the only transporter of D-alanine. Transports D-serine less efficiently than DsdX. In addition, in minimal media, transports the broad spectrum antibiotic D-cycloserine into the cell. Transports D-cycloserine only in minimal media, and not in a complex medium, suggesting that CycA does not play a role in D-cycloserine transport when E.coli is grown in a complex or biologically relevant medium, probably due to competition from other CycA substrates present in the medium. The protein is D-serine/D-alanine/glycine transporter (cycA) of Escherichia coli O6:H1 (strain CFT073 / ATCC 700928 / UPEC).